We begin with the raw amino-acid sequence, 287 residues long: ATP synthase gamma chain (287 aa).

Belongs to the ATPase gamma chain family. F-type ATPases have 2 components, CF(1) - the catalytic core - and CF(0) - the membrane proton channel. CF(1) has five subunits: alpha(3), beta(3), gamma(1), delta(1), epsilon(1). CF(0) has three main subunits: a, b and c.

It localises to the cell inner membrane. Produces ATP from ADP in the presence of a proton gradient across the membrane. The gamma chain is believed to be important in regulating ATPase activity and the flow of protons through the CF(0) complex. The polypeptide is ATP synthase gamma chain (Klebsiella pneumoniae subsp. pneumoniae (strain ATCC 700721 / MGH 78578)).